The chain runs to 49 residues: Large ribosomal subunit protein bL33B (49 aa).

The protein belongs to the bacterial ribosomal protein bL33 family.

The chain is Large ribosomal subunit protein bL33B from Limosilactobacillus fermentum (strain NBRC 3956 / LMG 18251) (Lactobacillus fermentum).